The sequence spans 218 residues: Zinc finger CCHC-type and RNA-binding motif-containing protein 1 (218 aa).

An RRM domain is found at 10 to 88 (STVYVSNLPF…RAIKASIAKD (79 aa)). The CCHC-type zinc finger occupies 105-122 (SRCYECGDTGHLSYACPK). Residues 119–218 (ACPKNMLGER…YFSDEDELSD (100 aa)) form a disordered region. Residues 132–188 (QKKEKKKRKRLVEEEEEEVVEEEESEDEGEDPALDSLSQAIAFQQARIDEEKNKYRH) are a coiled coil. Positions 144–164 (EEEEEEVVEEEESEDEGEDPA) are enriched in acidic residues. Residues 178 to 201 (RIDEEKNKYRHDPAEASTSEDSRR) show a composition bias toward basic and acidic residues.

In terms of assembly, component of the U11/U12 snRNPs that are part of the U12-type spliceosome.

The protein resides in the nucleus. The chain is Zinc finger CCHC-type and RNA-binding motif-containing protein 1 (zcrb1) from Xenopus laevis (African clawed frog).